The sequence spans 425 residues: Serine--tRNA ligase (425 aa).

L-serine is bound at residue T233–E235. Residue R264 to E266 participates in ATP binding. E287 contributes to the L-serine binding site. E351–S354 serves as a coordination point for ATP. An L-serine-binding site is contributed by S385.

The protein belongs to the class-II aminoacyl-tRNA synthetase family. Type-1 seryl-tRNA synthetase subfamily. As to quaternary structure, homodimer. The tRNA molecule binds across the dimer.

Its subcellular location is the cytoplasm. The enzyme catalyses tRNA(Ser) + L-serine + ATP = L-seryl-tRNA(Ser) + AMP + diphosphate + H(+). The catalysed reaction is tRNA(Sec) + L-serine + ATP = L-seryl-tRNA(Sec) + AMP + diphosphate + H(+). It participates in aminoacyl-tRNA biosynthesis; selenocysteinyl-tRNA(Sec) biosynthesis; L-seryl-tRNA(Sec) from L-serine and tRNA(Sec): step 1/1. Catalyzes the attachment of serine to tRNA(Ser). Is also able to aminoacylate tRNA(Sec) with serine, to form the misacylated tRNA L-seryl-tRNA(Sec), which will be further converted into selenocysteinyl-tRNA(Sec). The sequence is that of Serine--tRNA ligase from Synechococcus sp. (strain WH7803).